The chain runs to 387 residues: DNA primase small subunit PriS (387 aa).

Residues aspartate 98, aspartate 100, and aspartate 289 contribute to the active site.

This sequence belongs to the eukaryotic-type primase small subunit family. As to quaternary structure, heterodimer of a small subunit (PriS) and a large subunit (PriL). Mg(2+) serves as cofactor. It depends on Mn(2+) as a cofactor.

Catalytic subunit of DNA primase, an RNA polymerase that catalyzes the synthesis of short RNA molecules used as primers for DNA polymerase during DNA replication. The small subunit contains the primase catalytic core and has DNA synthesis activity on its own. Binding to the large subunit stabilizes and modulates the activity, increasing the rate of DNA synthesis while decreasing the length of the DNA fragments, and conferring RNA synthesis capability. The DNA polymerase activity may enable DNA primase to also catalyze primer extension after primer synthesis. May also play a role in DNA repair. The protein is DNA primase small subunit PriS of Halorubrum lacusprofundi (strain ATCC 49239 / DSM 5036 / JCM 8891 / ACAM 34).